A 287-amino-acid polypeptide reads, in one-letter code: Large ribosomal subunit protein uL2 (287 aa).

Residues 221–287 (RGSVMNPCDH…SKRSRGGRDS (67 aa)) form a disordered region. The segment covering 258–287 (KTRKKNKPSNKLVVRRRRRISKRSRGGRDS) has biased composition (basic residues).

This sequence belongs to the universal ribosomal protein uL2 family. In terms of assembly, part of the 50S ribosomal subunit. Forms a bridge to the 30S subunit in the 70S ribosome.

Its function is as follows. One of the primary rRNA binding proteins. Required for association of the 30S and 50S subunits to form the 70S ribosome, for tRNA binding and peptide bond formation. It has been suggested to have peptidyltransferase activity; this is somewhat controversial. Makes several contacts with the 16S rRNA in the 70S ribosome. This is Large ribosomal subunit protein uL2 from Prochlorococcus marinus subsp. pastoris (strain CCMP1986 / NIES-2087 / MED4).